The following is a 444-amino-acid chain: Protein-serine O-palmitoleoyltransferase porcupine (444 aa).

10 helical membrane-spanning segments follow: residues 29 to 49 (NGTL…FLVW), 81 to 101 (VMIF…KLNG), 128 to 150 (FLTL…FAIV), 163 to 183 (TLYL…YVTF), 201 to 221 (LGVF…AIIS), 249 to 269 (YFIC…IVVA), 304 to 324 (FFQS…LLHA), 326 to 346 (DYQM…ETVF), 383 to 403 (VLII…FTGM), and 420 to 440 (WTIW…FLAL). H323 is an active-site residue.

It belongs to the membrane-bound acyltransferase family. Porcupine subfamily.

Its subcellular location is the membrane. It catalyses the reaction [Wnt protein]-L-serine + (9Z)-hexadecenoyl-CoA = [Wnt protein]-O-(9Z)-hexadecenoyl-L-serine + CoA. Key regulator of the Wnt signaling pathway that mediates lipid modification of Wnt proteins. Acts as a protein-serine O-palmitoleoyltransferase that catalyzes the attachment of palmitoleate, a 16-carbon monounsaturated fatty acid (C16:1(9Z)), to Wnt proteins. Serine palmitoleoylation of WNT proteins is required for efficient binding to frizzled receptors. Has a role in cell specification, specifically in blastomere signaling. Involved in cytosketetal polarity. Required for the orientation of mitotic spindle axis. This is Protein-serine O-palmitoleoyltransferase porcupine from Caenorhabditis briggsae.